The following is a 197-amino-acid chain: RILP-like protein 2 (197 aa).

The disordered stretch occupies residues Met1 to Leu24. Over residues Glu8–Gly17 the composition is skewed to acidic residues. Residues Glu14–Ala96 form the RH1 domain. Residues Val69–Ser153 are a coiled coil. Residues Arg119–Ile184 form the RH2 domain.

This sequence belongs to the RILPL family. As to quaternary structure, homodimer. Interacts with RAC1. Interacts (via N-terminus) with MYO5A, the interaction is required for its role in dendrite formation. Interacts with RAB8A; interaction is dependent on the phosphorylation of RAB8A on 'Thr-72'. Interacts with RAB10 and RAB12; interaction is dependent on the phosphorylation of 'Thr-73' on RAB10 and 'Ser-105' on RAB12.

The protein localises to the cytoplasm. Its subcellular location is the cytosol. The protein resides in the cytoskeleton. It localises to the microtubule organizing center. It is found in the centrosome. The protein localises to the cell projection. Its subcellular location is the cilium. Its function is as follows. Involved in cell shape and neuronal morphogenesis, positively regulating the establishment and maintenance of dendritic spines. Plays a role in cellular protein transport, including protein transport away from primary cilia. May function via activation of RAC1 and PAK1. The sequence is that of RILP-like protein 2 (Rilpl2) from Mus musculus (Mouse).